The sequence spans 622 residues: Mitochondrial distribution and morphology protein 34 (622 aa).

The SMP-LTD domain maps to 1-195; it reads MAFNFNWSPL…LPAIIHRLSL (195 aa). Disordered stretches follow at residues 211 to 234, 303 to 322, 355 to 432, 445 to 464, 482 to 546, and 581 to 622; these read QVTNPPLEGPGLDPLLNPPEDPVD, PSGLVSPMSPPLSRTHSHVA, SMGA…IRQP, ERNARRGIPAEFGHDIPASR, SLQQ…QTHL, and KMGG…AYRH. The segment covering 214 to 225 has biased composition (low complexity); the sequence is NPPLEGPGLDPL. Residues 360–372 are compositionally biased toward basic residues; sequence RHSKAHARKRKKR. Basic and acidic residues predominate over residues 373 to 384; sequence VVDLRRRPKNTD. A compositionally biased stretch (low complexity) spans 388–404; sequence SVSGESEFTESTSAASV. Polar residues-rich tracts occupy residues 482-495 and 522-532; these read SLQQQLHPANSKSL and NASNYTSSGDS. 2 stretches are compositionally biased toward low complexity: residues 533 to 543 and 592 to 601; these read QQQQQQQQQHQ and NNKNDNKNNN.

This sequence belongs to the MDM34 family. In terms of assembly, component of the ER-mitochondria encounter structure (ERMES) or MDM complex, composed of MMM1, MDM10, MDM12 and MDM34.

Its subcellular location is the mitochondrion outer membrane. In terms of biological role, component of the ERMES/MDM complex, which serves as a molecular tether to connect the endoplasmic reticulum (ER) and mitochondria. Components of this complex are involved in the control of mitochondrial shape and protein biogenesis, and function in nonvesicular lipid trafficking between the ER and mitochondria. MDM34 is required for the interaction of the ER-resident membrane protein MMM1 and the outer mitochondrial membrane-resident beta-barrel protein MDM10. In Ajellomyces capsulatus (strain G186AR / H82 / ATCC MYA-2454 / RMSCC 2432) (Darling's disease fungus), this protein is Mitochondrial distribution and morphology protein 34.